Consider the following 60-residue polypeptide: UPF0337 protein asr1134 (60 aa).

Basic and acidic residues-rich tracts occupy residues 1–18 (MSLEDRAKATGKNIEGKA) and 29–60 (PEDKAEGKAKQAESEVRHGVEDVKDNVKKKID). Positions 1 to 60 (MSLEDRAKATGKNIEGKAQEALGNVTGDPEDKAEGKAKQAESEVRHGVEDVKDNVKKKID) are disordered.

This sequence belongs to the UPF0337 (CsbD) family.

The sequence is that of UPF0337 protein asr1134 from Nostoc sp. (strain PCC 7120 / SAG 25.82 / UTEX 2576).